We begin with the raw amino-acid sequence, 389 residues long: MENINVLKSDFTKLFAKDAESVFFSPGRVNLIGEHTDYNGGNVFPCALTIGTYALVRQREDKNVLVNSLNFKELGILEFSLENMIYEKQHDWANYPKGVIKTFENHGYNIPNGFEILFYGNIPNGSGLSSSASIEVLMGTILNDLFNLNINMVDIVKMCQEAENKFIGVNCGIMDQFAIGMGKENCAILLDCNTLKYSYSTIAMDGYKIVIANTNKKRGLADSKYNERRSECETALAEIQKVKNINALGELTEEEFEEVKSCISDPIKAKRAKHAVYENRRTLKAVKALEENDLTLFGKLMNDSHISLRDDYEVTGIELDTLVSLAWKSEGVIGARMTGAGFGGCTVNIVKEDCIDSFVEKVKAEYTSKIGYEPSFYVVSISDGTRKIG.

34 to 37 is a binding site for substrate; it reads EHTD. Residues S68 and 125–131 contribute to the ATP site; that span reads GSGLSSS. Mg(2+) is bound by residues S131 and E163. The active-site Proton acceptor is the D175. Y225 serves as a coordination point for substrate.

It belongs to the GHMP kinase family. GalK subfamily.

It localises to the cytoplasm. The enzyme catalyses alpha-D-galactose + ATP = alpha-D-galactose 1-phosphate + ADP + H(+). It functions in the pathway carbohydrate metabolism; galactose metabolism. In terms of biological role, catalyzes the transfer of the gamma-phosphate of ATP to D-galactose to form alpha-D-galactose-1-phosphate (Gal-1-P). In Clostridium beijerinckii (strain ATCC 51743 / NCIMB 8052) (Clostridium acetobutylicum), this protein is Galactokinase.